Consider the following 69-residue polypeptide: Pleurain-A2 (69 aa).

Positions 1-22 (MFTLKKTLLLLYFLGTISISLC) are cleaved as a signal peptide. Positions 23–43 (KQERDADEDDGRKMTEEEVKR) are excised as a propeptide. An intrachain disulfide couples C63 to C69.

In terms of tissue distribution, expressed by the skin glands.

The protein localises to the secreted. In terms of biological role, antimicrobial peptide. Has activity against the Gram-positive bacterium S.aureus ATCC2592 (MIC=15 ug/ml), the Gram-negative bacteria E.coli ATCC25922 (MIC=60 ug/ml), B.dysenteriae (MIC=60 ug/ml), H.pylori NTCT11637 (MIC=30 ug/ml), and the fungus C.albicans ATCC2002 (MIC=30 ug/ml). Has little hemolytic activity on rabbit red blood cells. The polypeptide is Pleurain-A2 (Nidirana pleuraden (Yunnan pond frog)).